The primary structure comprises 132 residues: SH2 domain-containing protein 1B2 (132 aa).

In terms of domain architecture, SH2 spans 5-101 (YYHGCLTKRE…GMVVHLSNPI (97 aa)).

Interacts with SLAMF1 (phosphorylated). Interacts with CD244. Interacts with Src kinases HCK, LYN, FYN, FGR and LCK (via kinase domains). As to expression, expressed in spleen. Expressed in macrophages, CD8(+) T-Cells and NK cells. Conflictingly found only in NK cells.

The protein localises to the cytoplasm. Functionally, cytoplasmic adapter regulating receptors of the signaling lymphocytic activation molecule (SLAM) family. In SLAM signaling may cooperate with Sh2d1a/SAP. Plays a role in regulation of effector functions of natural killer (NK) cells by controlling signal transduction through Cd244/2b4. However, conflicting results are reported which may reflect the use of different strain backgrounds. Proposed to act as an inhibitor of Cd244-mediated NK cell function including cytotoxicity and IFN-gamma production, the latter found also by triggering Klra4 and Klrk1 next to Cd244. Seems to positively regulate Cd244- and Cd84-dependent NK cell functions implicating Cd244-mediated phosphorylation of Vav1. This is SH2 domain-containing protein 1B2 (Sh2d1b2) from Mus musculus (Mouse).